A 485-amino-acid chain; its full sequence is GlcNAc-binding protein A (485 aa).

Residues 1–23 (MKKQPKMTAIALILSGISGLAYG) form the signal peptide. Residues 24–201 (HGYVSAVENG…SFYNVIDVKF (178 aa)) form the Chitin-binding type-4 domain. The Chitin-binding type-3 domain occupies 437 to 478 (AGTKVLASDGAIYQCKPWPYSGYCQQWTSNATQYQPGTGSHW).

This sequence belongs to the GbpA family.

It localises to the secreted. Functionally, probably interacts with GlcNAc residues. May promote attachment to both epithelial cell surfaces and chitin. In Vibrio cholerae serotype O1 (strain M66-2), this protein is GlcNAc-binding protein A.